We begin with the raw amino-acid sequence, 130 residues long: Ribonuclease P protein component 2 (130 aa).

This sequence belongs to the eukaryotic/archaeal RNase P protein component 2 family. Consists of a catalytic RNA component and at least 4-5 protein subunits.

It is found in the cytoplasm. The catalysed reaction is Endonucleolytic cleavage of RNA, removing 5'-extranucleotides from tRNA precursor.. In terms of biological role, part of ribonuclease P, a protein complex that generates mature tRNA molecules by cleaving their 5'-ends. This is Ribonuclease P protein component 2 from Methanococcus vannielii (strain ATCC 35089 / DSM 1224 / JCM 13029 / OCM 148 / SB).